A 293-amino-acid polypeptide reads, in one-letter code: NAD kinase (293 aa).

The active-site Proton acceptor is Asp-68. NAD(+) is bound by residues 68 to 69, 142 to 143, Arg-153, Asp-172, and 183 to 188; these read DG, ND, and TAYSLS.

Belongs to the NAD kinase family. A divalent metal cation is required as a cofactor.

It is found in the cytoplasm. It carries out the reaction NAD(+) + ATP = ADP + NADP(+) + H(+). Its function is as follows. Involved in the regulation of the intracellular balance of NAD and NADP, and is a key enzyme in the biosynthesis of NADP. Catalyzes specifically the phosphorylation on 2'-hydroxyl of the adenosine moiety of NAD to yield NADP. The protein is NAD kinase of Lachnospira eligens (strain ATCC 27750 / DSM 3376 / VPI C15-48 / C15-B4) (Eubacterium eligens).